We begin with the raw amino-acid sequence, 79 residues long: ATP synthase subunit c (79 aa).

The next 2 helical transmembrane spans lie at 11–31 and 53–73; these read MAAAIMMGLAAIGAAIGIGIL and FFIVMGLVDAIPMIAVGLGLY.

It belongs to the ATPase C chain family. F-type ATPases have 2 components, F(1) - the catalytic core - and F(0) - the membrane proton channel. F(1) has five subunits: alpha(3), beta(3), gamma(1), delta(1), epsilon(1). F(0) has three main subunits: a(1), b(2) and c(10-14). The alpha and beta chains form an alternating ring which encloses part of the gamma chain. F(1) is attached to F(0) by a central stalk formed by the gamma and epsilon chains, while a peripheral stalk is formed by the delta and b chains.

The protein resides in the cell inner membrane. In terms of biological role, f(1)F(0) ATP synthase produces ATP from ADP in the presence of a proton or sodium gradient. F-type ATPases consist of two structural domains, F(1) containing the extramembraneous catalytic core and F(0) containing the membrane proton channel, linked together by a central stalk and a peripheral stalk. During catalysis, ATP synthesis in the catalytic domain of F(1) is coupled via a rotary mechanism of the central stalk subunits to proton translocation. Functionally, key component of the F(0) channel; it plays a direct role in translocation across the membrane. A homomeric c-ring of between 10-14 subunits forms the central stalk rotor element with the F(1) delta and epsilon subunits. In Yersinia enterocolitica serotype O:8 / biotype 1B (strain NCTC 13174 / 8081), this protein is ATP synthase subunit c.